Consider the following 164-residue polypeptide: Transcription antitermination protein NusB (164 aa).

This sequence belongs to the NusB family.

In terms of biological role, involved in transcription antitermination. Required for transcription of ribosomal RNA (rRNA) genes. Binds specifically to the boxA antiterminator sequence of the ribosomal RNA (rrn) operons. The chain is Transcription antitermination protein NusB from Chlorobium limicola (strain DSM 245 / NBRC 103803 / 6330).